Here is a 300-residue protein sequence, read N- to C-terminus: Lysenin-related protein 3 (300 aa).

The interval 12-35 is N-terminal cap domain; sequence EEIEVDVVAVWKEGYVYENRGDTS. Residues 36–109 form a beta-hairpin domain region; it reads VEQKITMTKG…SQVIEHTVTI (74 aa). An N-terminal cap domain region spans residues 110-158; sequence PPTSKFTRWKLNADVGGTDIEYMYLIDEVTPISVTQTIPQVIRSRAKIL. The segment at 159–299 is C-terminal receptor-binding domain; the sequence is VGRQIHLGTT…EDKWILEVVN (141 aa). The an N-(acyl)-sphingosylphosphocholine site is built by K187, S229, Y235, and Y284. The cysteines at positions 274 and 285 are disulfide-linked.

Belongs to the lysenin family. In terms of assembly, binds to sphingomyelin as a monomer by using its C-terminal domain. Forms a nonamer when sphingomyelin/LRP-3 ratio is lower than ca 500. Oligomerization, but not binding, is influenced by the fluidity of sphingomyelin. Expressed by coelomocytes.

It is found in the secreted. The protein localises to the target cell membrane. In terms of biological role, pore-forming toxin that specifically binds sphingomyelin in the plasma membrane of various cells. Has antibacterial and hemolytic activity. The polypeptide is Lysenin-related protein 3 (Eisenia fetida (Red wiggler worm)).